Consider the following 918-residue polypeptide: Valine--tRNA ligase (918 aa).

A 'HIGH' region motif is present at residues 50–60; the sequence is PNVTGSLHMGH. The 'KMSKS' region motif lies at 548-552; that stretch reads KMSKS. An ATP-binding site is contributed by Lys551. Residues 849-883 adopt a coiled-coil conformation; sequence NDFVNLEALKDRLTKDLKKVNSDIETLNKRISNKN.

Belongs to the class-I aminoacyl-tRNA synthetase family. ValS type 1 subfamily. In terms of assembly, monomer.

The protein localises to the cytoplasm. It catalyses the reaction tRNA(Val) + L-valine + ATP = L-valyl-tRNA(Val) + AMP + diphosphate. Its function is as follows. Catalyzes the attachment of valine to tRNA(Val). As ValRS can inadvertently accommodate and process structurally similar amino acids such as threonine, to avoid such errors, it has a 'posttransfer' editing activity that hydrolyzes mischarged Thr-tRNA(Val) in a tRNA-dependent manner. The protein is Valine--tRNA ligase of Prochlorococcus marinus subsp. pastoris (strain CCMP1986 / NIES-2087 / MED4).